The following is a 551-amino-acid chain: Adenylyl cyclase-associated protein (551 aa).

A disordered region spans residues 34 to 55 (SGHKPLPNMHRPSRDSNSQTHN). Serine 92 is subject to Phosphoserine. Phosphothreonine is present on threonine 96. A compositionally biased stretch (polar residues) spans 288-300 (SASKTQAPSSGDS). Disordered stretches follow at residues 288 to 333 (SASK…NKGD) and 348 to 395 (TSGL…PVKP). Pro residues predominate over residues 305 to 315 (LPPPPPPPPPS). The segment covering 352–361 (RKVDKSEMTH) has biased composition (basic and acidic residues). Residues 395-529 (PPRIELENTK…EEGDYAERAV (135 aa)) form the C-CAP/cofactor C-like domain.

It belongs to the CAP family.

In terms of biological role, the N-terminal domain binds to adenylyl cyclase, thereby enabling adenylyl cyclase to be activated by upstream regulatory signals, such as Ras. The C-terminal domain is required for normal cellular morphology and growth control. This Schizosaccharomyces pombe (strain 972 / ATCC 24843) (Fission yeast) protein is Adenylyl cyclase-associated protein (cap1).